Consider the following 173-residue polypeptide: Adenine phosphoribosyltransferase (173 aa).

This sequence belongs to the purine/pyrimidine phosphoribosyltransferase family. Homodimer.

The protein resides in the cytoplasm. The enzyme catalyses AMP + diphosphate = 5-phospho-alpha-D-ribose 1-diphosphate + adenine. The protein operates within purine metabolism; AMP biosynthesis via salvage pathway; AMP from adenine: step 1/1. Catalyzes a salvage reaction resulting in the formation of AMP, that is energically less costly than de novo synthesis. This chain is Adenine phosphoribosyltransferase, found in Desulfosudis oleivorans (strain DSM 6200 / JCM 39069 / Hxd3) (Desulfococcus oleovorans).